A 189-amino-acid polypeptide reads, in one-letter code: MEALHKKIREEGIVLSDQVLKVDAFLNHQIDPALMKEIGDEFARLFADAGVTKIVTIEASGIAPAVMAGLNMGVPVIFARKHQSLTLTENLLSATVYSFTKQVESTVAISPRHLSSDDHVLIIDDFLANGKASQALISIIKQAGATVAGLGIVIEKSFQGGRAELDAQGYRVESLARVESLAGGVVTFK.

Residues Leu20 and Asn27 each contribute to the xanthine site. 128–132 contributes to the 5-phospho-alpha-D-ribose 1-diphosphate binding site; the sequence is ANGKA. Lys156 contacts xanthine.

Belongs to the purine/pyrimidine phosphoribosyltransferase family. Xpt subfamily. In terms of assembly, homodimer.

Its subcellular location is the cytoplasm. It catalyses the reaction XMP + diphosphate = xanthine + 5-phospho-alpha-D-ribose 1-diphosphate. It participates in purine metabolism; XMP biosynthesis via salvage pathway; XMP from xanthine: step 1/1. Functionally, converts the preformed base xanthine, a product of nucleic acid breakdown, to xanthosine 5'-monophosphate (XMP), so it can be reused for RNA or DNA synthesis. This Pseudomonas savastanoi pv. phaseolicola (strain 1448A / Race 6) (Pseudomonas syringae pv. phaseolicola (strain 1448A / Race 6)) protein is Xanthine phosphoribosyltransferase.